The primary structure comprises 122 residues: Large ribosomal subunit protein bL17 (122 aa).

It belongs to the bacterial ribosomal protein bL17 family. As to quaternary structure, part of the 50S ribosomal subunit. Contacts protein L32.

The polypeptide is Large ribosomal subunit protein bL17 (Neisseria meningitidis serogroup C / serotype 2a (strain ATCC 700532 / DSM 15464 / FAM18)).